The sequence spans 1202 residues: Caskin-2 (1202 aa).

6 ANK repeats span residues 48-77, 81-110, 114-143, 147-176, 188-217, and 220-249; these read DGFS…TVDI, NGMR…AVNA, DGQI…NPCL, AKKT…CVAL, NYTT…EINR, and KTGT…DVNI. Position 253 is a phosphotyrosine (Tyr253). An SH3 domain is found at 281-347; that stretch reads SGILKVRALK…PPGIVEVVSK (67 aa). The disordered stretch occupies residues 355–460; sequence RLPSAPTPLR…GLHPPSLADN (106 aa). 6 positions are modified to phosphoserine: Ser358, Ser393, Ser396, Ser403, Ser406, and Ser409. Residues 415 to 425 are compositionally biased toward polar residues; it reads SAGSGQSSEGT. Ser471 bears the Phosphoserine mark. SAM domains follow at residues 489-552 and 558-622; these read KDAQ…LSIA and YIPT…LAEL. Disordered stretches follow at residues 676–1104 and 1116–1181; these read LQAA…APKP and GPKL…STKH. A Phosphoserine modification is found at Ser725. Residues 731-740 are compositionally biased toward basic and acidic residues; sequence NLPEGTERPP. The span at 765-774 shows a compositional bias: pro residues; the sequence is SPAPGPPPGA. A phosphoserine mark is found at Ser858, Ser877, Ser878, and Ser892. Pro residues predominate over residues 913–923; the sequence is PSEPPGPPAPA. Low complexity predominate over residues 940–949; that stretch reads PPSRGSSGEG. Composition is skewed to pro residues over residues 966 to 978 and 1018 to 1030; these read PAGP…PVPP and PAAP…PGES. Over residues 1031–1051 the composition is skewed to low complexity; sequence PPASSLPQPEPSSLPAQGVPT. Composition is skewed to pro residues over residues 1052–1068 and 1124–1133; these read PLAP…PCPG and GPRPVPPPRP. The segment covering 1135 to 1151 has biased composition (polar residues); it reads STGTVGPGQAQQRLEQT. A compositionally biased stretch (basic and acidic residues) spans 1161-1172; it reads AAEKSIGTKEQE.

In terms of assembly, may not bind CASK.

It is found in the cytoplasm. The protein is Caskin-2 (CASKIN2) of Homo sapiens (Human).